Reading from the N-terminus, the 217-residue chain is Probable GTP-binding protein EngB (217 aa).

One can recognise an EngB-type G domain in the interval 29-213 (GPSEVAFAGR…RQAIAQTVGI (185 aa)). GTP-binding positions include 37–44 (GRSNVGKS), 64–68 (GRTQE), 91–94 (DMPG), 158–161 (TKTD), and 192–194 (TSS). Mg(2+)-binding residues include S44 and T66.

This sequence belongs to the TRAFAC class TrmE-Era-EngA-EngB-Septin-like GTPase superfamily. EngB GTPase family. The cofactor is Mg(2+).

In terms of biological role, necessary for normal cell division and for the maintenance of normal septation. This Rhizobium etli (strain CIAT 652) protein is Probable GTP-binding protein EngB.